The sequence spans 211 residues: MKGKFIVFEGIDGSGKTTQINQLSKWLISTDLIPENNKLVITREPGGTQLGKSIRSLLLDTSIEKSPDSITELLLYAADRSQHVNEIIRPTLDQGDWVISDRFCGSTLAYQGYGRKLDITLIKDLEAIATQGIAPDITFLLDIPIEESIRRRRNRKDDRIEKEGREFLSNVSLGFQALSEDSHWKKISAIDSKEKIISEIKSEIKKLIKNK.

Gly10–Thr17 contacts ATP.

The protein belongs to the thymidylate kinase family.

The enzyme catalyses dTMP + ATP = dTDP + ADP. In terms of biological role, phosphorylation of dTMP to form dTDP in both de novo and salvage pathways of dTTP synthesis. The chain is Thymidylate kinase from Prochlorococcus marinus (strain NATL1A).